The primary structure comprises 215 residues: BAG family molecular chaperone regulator 5, mitochondrial (215 aa).

The N-terminal 14 residues, 1-14 (MKRSRKFSSSTTTT), are a transit peptide targeting the mitochondrion. The region spanning 50 to 79 (ATAAAARIQSGYRSYRIRNLYKKISSINRE) is the IQ domain. A BAG domain is found at 72 to 149 (KISSINREAN…GMQEILDSIS (78 aa)).

Binds to the ATPase domain of HSP70/HSC70 chaperones. Interacts with HSP70-1.

The protein resides in the mitochondrion. Functionally, co-chaperone that regulates diverse cellular pathways, such as programmed cell death and stress responses. The sequence is that of BAG family molecular chaperone regulator 5, mitochondrial (BAG5) from Arabidopsis thaliana (Mouse-ear cress).